Reading from the N-terminus, the 559-residue chain is Methionine--tRNA ligase (559 aa).

The 'HIGH' region signature appears at 10-20; the sequence is PYINAVPHLGT. C141, C144, C154, and C157 together coordinate Zn(2+). The short motif at 331-335 is the 'KMSKS' region element; sequence KFSKS. K334 contacts ATP.

Belongs to the class-I aminoacyl-tRNA synthetase family. MetG type 1 subfamily. Zn(2+) serves as cofactor.

The protein localises to the cytoplasm. The catalysed reaction is tRNA(Met) + L-methionine + ATP = L-methionyl-tRNA(Met) + AMP + diphosphate. Is required not only for elongation of protein synthesis but also for the initiation of all mRNA translation through initiator tRNA(fMet) aminoacylation. This chain is Methionine--tRNA ligase, found in Korarchaeum cryptofilum (strain OPF8).